The sequence spans 307 residues: Taste receptor type 2 member 41 (307 aa).

At 1 to 7 the chain is on the extracellular side; that stretch reads MQAALTA. Residues 8-28 traverse the membrane as a helical segment; it reads FFMLLFSLLSLLGIAANGFIV. At 29–40 the chain is on the cytoplasmic side; it reads LVLGREWLRYGR. The helical transmembrane segment at 41–61 threads the bilayer; that stretch reads LLPLDMILISLGASRFCLQLV. The Extracellular segment spans residues 62 to 88; sequence GTVHNFYYSAQKVEYSGGLGRQFFHLH. The helical transmembrane segment at 89–109 threads the bilayer; that stretch reads WHFLNSATFWFCSWLSVLFCV. Residues 110 to 129 lie on the Cytoplasmic side of the membrane; the sequence is KIANITHPTFLWLKWRFPGW. The chain crosses the membrane as a helical span at residues 130-150; sequence VPWLLLGSVLISFIITLLFFW. Residues 151–183 lie on the Extracellular side of the membrane; that stretch reads VNYPAYQEFLIRKFSVNMTYKWNTRIETYYFPS. An N-linked (GlcNAc...) asparagine glycan is attached at Asn167. A helical membrane pass occupies residues 184-204; the sequence is LKLVIWSIPFSVFLVSIMLLI. Over 205–234 the chain is Cytoplasmic; that stretch reads NSLRRHTQRMQHNGHSLQDPSTQAHTRALK. A helical transmembrane segment spans residues 235 to 255; sequence SLISFLILYALSFLSLIIDAT. The Extracellular segment spans residues 256–264; the sequence is KFISMQNDF. A helical membrane pass occupies residues 265–285; the sequence is YWPWQIAVYLCISVHPFILIF. The Cytoplasmic portion of the chain corresponds to 286–307; the sequence is SNLKLRSVFSQLLLLARGFWVA.

It belongs to the G-protein coupled receptor T2R family.

The protein resides in the membrane. In terms of biological role, receptor that may play a role in the perception of bitterness and is gustducin-linked. May play a role in sensing the chemical composition of the gastrointestinal content. The activity of this receptor may stimulate alpha gustducin, mediate PLC-beta-2 activation and lead to the gating of TRPM5. This is Taste receptor type 2 member 41 (TAS2R41) from Pan troglodytes (Chimpanzee).